We begin with the raw amino-acid sequence, 181 residues long: Dual-action ribosomal maturation protein DarP (181 aa).

Belongs to the DarP family.

The protein localises to the cytoplasm. Member of a network of 50S ribosomal subunit biogenesis factors which assembles along the 30S-50S interface, preventing incorrect 23S rRNA structures from forming. Promotes peptidyl transferase center (PTC) maturation. In Actinobacillus succinogenes (strain ATCC 55618 / DSM 22257 / CCUG 43843 / 130Z), this protein is Dual-action ribosomal maturation protein DarP.